We begin with the raw amino-acid sequence, 277 residues long: MSVNSPVRPVMAADILARKGGEPIVCLTAYTTPMARLVDAHCDLTLVGDSLGMVVHGLPTTLGVTMEMMILHGQAVARGTSRSMLVVDMPFGSYEESPAQAFANARRLMAETGCAAVKLEGGQHMAETIRFLVARGVPVMAHIGLTPQAVNALGGYKVQGRGADAERVMEDAIAVAEAGAFSVVLEKVPDGLSQRITQRIAIPTIGIGASAHCDGQVLVLDDMLGLFADFRPKFVKRYGELGASADEAIATYAAEVRARRFPAPEHVFADELKGKAQ.

Residues aspartate 49 and aspartate 88 each contribute to the Mg(2+) site. 3-methyl-2-oxobutanoate contacts are provided by residues 49–50, aspartate 88, and lysine 118; that span reads DS. A Mg(2+)-binding site is contributed by glutamate 120. The active-site Proton acceptor is the glutamate 186.

It belongs to the PanB family. As to quaternary structure, homodecamer; pentamer of dimers. Mg(2+) is required as a cofactor.

The protein localises to the cytoplasm. The enzyme catalyses 3-methyl-2-oxobutanoate + (6R)-5,10-methylene-5,6,7,8-tetrahydrofolate + H2O = 2-dehydropantoate + (6S)-5,6,7,8-tetrahydrofolate. The protein operates within cofactor biosynthesis; (R)-pantothenate biosynthesis; (R)-pantoate from 3-methyl-2-oxobutanoate: step 1/2. Its function is as follows. Catalyzes the reversible reaction in which hydroxymethyl group from 5,10-methylenetetrahydrofolate is transferred onto alpha-ketoisovalerate to form ketopantoate. In Cereibacter sphaeroides (strain ATCC 17029 / ATH 2.4.9) (Rhodobacter sphaeroides), this protein is 3-methyl-2-oxobutanoate hydroxymethyltransferase.